Reading from the N-terminus, the 156-residue chain is 6,7-dimethyl-8-ribityllumazine synthase (156 aa).

5-amino-6-(D-ribitylamino)uracil contacts are provided by residues phenylalanine 23, 57-59 (AFE), and 81-83 (TVI). Position 86–87 (86–87 (ST)) interacts with (2S)-2-hydroxy-3-oxobutyl phosphate. Histidine 89 functions as the Proton donor in the catalytic mechanism. A 5-amino-6-(D-ribitylamino)uracil-binding site is contributed by phenylalanine 114. Arginine 128 is a (2S)-2-hydroxy-3-oxobutyl phosphate binding site.

The protein belongs to the DMRL synthase family. As to quaternary structure, forms an icosahedral capsid composed of 60 subunits, arranged as a dodecamer of pentamers.

The catalysed reaction is (2S)-2-hydroxy-3-oxobutyl phosphate + 5-amino-6-(D-ribitylamino)uracil = 6,7-dimethyl-8-(1-D-ribityl)lumazine + phosphate + 2 H2O + H(+). Its pathway is cofactor biosynthesis; riboflavin biosynthesis; riboflavin from 2-hydroxy-3-oxobutyl phosphate and 5-amino-6-(D-ribitylamino)uracil: step 1/2. Its function is as follows. Catalyzes the formation of 6,7-dimethyl-8-ribityllumazine by condensation of 5-amino-6-(D-ribitylamino)uracil with 3,4-dihydroxy-2-butanone 4-phosphate. This is the penultimate step in the biosynthesis of riboflavin. The chain is 6,7-dimethyl-8-ribityllumazine synthase from Halalkalibacterium halodurans (strain ATCC BAA-125 / DSM 18197 / FERM 7344 / JCM 9153 / C-125) (Bacillus halodurans).